Reading from the N-terminus, the 289-residue chain is MQSLQDNITSRLEAVDGEGRFVEDLWEREEGGGGRSRILTEGRVFERAGIGFSEVHGSHLPPSILQQRPEAEGHPFYVTGTSMVLHPRNPYVPTVHLNYRYFEAGPVWWFGGGADLTPYYGFVEDAAHFHATLKAACDAHDPEYYPRFKKWCDEYFYLKHRQEPRGVGGIFFDYVQGDWEKIFAFAQSCGNAFLPAYLPIVERRHTLPYAERERNFQLYRRGRYVEFNLVWDRGTIFGLQTNGRIESILMSMPPLVRWEYNYRPEPGTAEAELYEVFLVPQDWASQAKR.

Ser82 provides a ligand contact to substrate. His86 and His96 together coordinate a divalent metal cation. His96 serves as the catalytic Proton donor. Residue 98–100 participates in substrate binding; the sequence is NYR. Positions 130 and 160 each coordinate a divalent metal cation. An important for dimerization region spans residues 224 to 259; sequence YVEFNLVWDRGTIFGLQTNGRIESILMSMPPLVRWE.

The protein belongs to the aerobic coproporphyrinogen-III oxidase family. In terms of assembly, homodimer. It depends on a divalent metal cation as a cofactor.

Its subcellular location is the cytoplasm. It carries out the reaction coproporphyrinogen III + O2 + 2 H(+) = protoporphyrinogen IX + 2 CO2 + 2 H2O. It participates in porphyrin-containing compound metabolism; protoporphyrin-IX biosynthesis; protoporphyrinogen-IX from coproporphyrinogen-III (O2 route): step 1/1. Its function is as follows. Involved in the heme and chlorophyll biosynthesis. Catalyzes the aerobic oxidative decarboxylation of propionate groups of rings A and B of coproporphyrinogen-III to yield the vinyl groups in protoporphyrinogen-IX. The protein is Oxygen-dependent coproporphyrinogen-III oxidase of Gloeobacter violaceus (strain ATCC 29082 / PCC 7421).